The sequence spans 327 residues: 4-hydroxythreonine-4-phosphate dehydrogenase (327 aa).

Substrate-binding residues include histidine 134 and threonine 135. Residues histidine 164, histidine 209, and histidine 264 each coordinate a divalent metal cation. Residues lysine 272, asparagine 281, and arginine 290 each coordinate substrate.

This sequence belongs to the PdxA family. As to quaternary structure, homodimer. The cofactor is Zn(2+). It depends on Mg(2+) as a cofactor. Co(2+) serves as cofactor.

The protein resides in the cytoplasm. The catalysed reaction is 4-(phosphooxy)-L-threonine + NAD(+) = 3-amino-2-oxopropyl phosphate + CO2 + NADH. It participates in cofactor biosynthesis; pyridoxine 5'-phosphate biosynthesis; pyridoxine 5'-phosphate from D-erythrose 4-phosphate: step 4/5. Functionally, catalyzes the NAD(P)-dependent oxidation of 4-(phosphooxy)-L-threonine (HTP) into 2-amino-3-oxo-4-(phosphooxy)butyric acid which spontaneously decarboxylates to form 3-amino-2-oxopropyl phosphate (AHAP). This is 4-hydroxythreonine-4-phosphate dehydrogenase from Shewanella frigidimarina (strain NCIMB 400).